We begin with the raw amino-acid sequence, 634 residues long: TATA box-binding protein-associated factor RNA polymerase I subunit B (634 aa).

The RRN7-type zinc-finger motif lies at 19–51 (LVCEYCGHGSEYAEDDADNGFFTCRQCSAIHTS). Zn(2+) is bound by residues C21, C24, C42, and C45. A B-reader region spans residues 51 to 80 (STQNTATNPFDFPMTPAHLSAHRRPTQPTP). The tract at residues 56 to 117 (ATNPFDFPMT…EPRDFATGAN (62 aa)) is disordered. Positions 77-87 (QPTPTPKPFPA) are enriched in pro residues. A B-linker region spans residues 81–83 (TPK). Positions 84 to 281 (PFPAPRGAAT…DKLLGSSLND (198 aa)) are N-terminal cyclin fold. The segment covering 88–98 (PRGAATGAAAP) has biased composition (low complexity). The tract at residues 282 to 284 (CPL) is C-terminal cyclin fold.

Belongs to the RRN7/TAF1B family.

It localises to the nucleus. The protein localises to the nucleolus. Functionally, component of RNA polymerase I core factor complex that acts as a GTF2B/TFIIB-like factor and plays a key role in multiple steps during transcription initiation such as pre-initiation complex (PIC) assembly and postpolymerase recruitment events in polymerase I (Pol I) transcription. Binds rDNA promoters and plays a role in Pol I recruitment. In Oryza sativa subsp. indica (Rice), this protein is TATA box-binding protein-associated factor RNA polymerase I subunit B.